A 1026-amino-acid chain; its full sequence is Multidrug resistance protein MdtC (1026 aa).

The next 11 helical transmembrane spans lie at 15–35 (ILIA…LPVA), 333–353 (EVEE…FLFL), 360–380 (LIPA…MYLC), 387–407 (LSLM…IVVL), 431–451 (VGFT…PLLL), 463–483 (FAVT…TLTP), 528–548 (LVGV…IAIP), 853–873 (LILI…LYES), 897–917 (LFNA…IGIV), 953–973 (PIMM…LSGG), and 984–1004 (ITIV…TPVV).

This sequence belongs to the resistance-nodulation-cell division (RND) (TC 2.A.6) family. MdtC subfamily. Part of a tripartite efflux system composed of MdtA, MdtB and MdtC. MdtC forms a heteromultimer with MdtB.

It localises to the cell inner membrane. The chain is Multidrug resistance protein MdtC from Salmonella schwarzengrund (strain CVM19633).